The sequence spans 324 residues: HPr kinase/phosphorylase (324 aa).

Active-site residues include His-146 and Lys-167. 161 to 168 (GDSGLGKS) provides a ligand contact to ATP. Mg(2+) is bound at residue Ser-168. Asp-185 functions as the Proton acceptor; for phosphorylation activity. Proton donor; for dephosphorylation activity in the catalytic mechanism. An important for the catalytic mechanism of both phosphorylation and dephosphorylation region spans residues 209 to 218 (LEVRGLGLLD). Mg(2+) is bound at residue Glu-210. Arg-250 is a catalytic residue. Residues 271–276 (QVAAGR) are important for the catalytic mechanism of dephosphorylation.

The protein belongs to the HPrK/P family. Homohexamer. The cofactor is Mg(2+).

The enzyme catalyses [HPr protein]-L-serine + ATP = [HPr protein]-O-phospho-L-serine + ADP + H(+). The catalysed reaction is [HPr protein]-O-phospho-L-serine + phosphate + H(+) = [HPr protein]-L-serine + diphosphate. In terms of biological role, catalyzes the ATP- as well as the pyrophosphate-dependent phosphorylation of a specific serine residue in HPr, a phosphocarrier protein of the phosphoenolpyruvate-dependent sugar phosphotransferase system (PTS). HprK/P also catalyzes the pyrophosphate-producing, inorganic phosphate-dependent dephosphorylation (phosphorolysis) of seryl-phosphorylated HPr (P-Ser-HPr). The protein is HPr kinase/phosphorylase of Ralstonia pickettii (strain 12J).